Consider the following 775-residue polypeptide: Subtilisin-like protease SBT4.1 (775 aa).

The signal sequence occupies residues Met1–Ala23. N-linked (GlcNAc...) asparagine glycosylation is present at Asn24. A propeptide spans Asn24–Gln106 (activation peptide). Residues Thr29–Leu105 enclose the Inhibitor I9 domain. Residues Ser110–Arg606 form the Peptidase S8 domain. N-linked (GlcNAc...) asparagine glycans are attached at residues Asn115 and Asn126. Asp136 acts as the Charge relay system in catalysis. Residue Asn162 is glycosylated (N-linked (GlcNAc...) asparagine). The Charge relay system role is filled by His196. The PA domain occupies Phe365 to Leu459. Asn437 carries N-linked (GlcNAc...) asparagine glycosylation. The active-site Charge relay system is Ser551. N-linked (GlcNAc...) asparagine glycosylation occurs at Asn601.

The protein belongs to the peptidase S8 family. Post-translationally, the C-terminal propeptide is autocleaved.

It localises to the secreted. The sequence is that of Subtilisin-like protease SBT4.1 from Arabidopsis thaliana (Mouse-ear cress).